The primary structure comprises 312 residues: tRNA dimethylallyltransferase (312 aa).

ATP is bound at residue 11 to 18 (GPTAVGKT). Residue 13-18 (TAVGKT) participates in substrate binding. The segment at 159-163 (QRVLR) is interaction with substrate tRNA.

The protein belongs to the IPP transferase family. As to quaternary structure, monomer. Mg(2+) is required as a cofactor.

The catalysed reaction is adenosine(37) in tRNA + dimethylallyl diphosphate = N(6)-dimethylallyladenosine(37) in tRNA + diphosphate. In terms of biological role, catalyzes the transfer of a dimethylallyl group onto the adenine at position 37 in tRNAs that read codons beginning with uridine, leading to the formation of N6-(dimethylallyl)adenosine (i(6)A). This is tRNA dimethylallyltransferase from Macrococcus caseolyticus (strain JCSC5402) (Macrococcoides caseolyticum).